We begin with the raw amino-acid sequence, 130 residues long: Glycine cleavage system H protein (130 aa).

In terms of domain architecture, Lipoyl-binding spans 24-106 (TLTIGITDHA…YGEGWIMRIR (83 aa)). N6-lipoyllysine is present on lysine 65. Residues 111 to 130 (DDLEQLLDPEDYQDLVADEE) are disordered.

This sequence belongs to the GcvH family. In terms of assembly, the glycine cleavage system is composed of four proteins: P, T, L and H. It depends on (R)-lipoate as a cofactor.

In terms of biological role, the glycine cleavage system catalyzes the degradation of glycine. The H protein shuttles the methylamine group of glycine from the P protein to the T protein. The polypeptide is Glycine cleavage system H protein (Alkalilimnicola ehrlichii (strain ATCC BAA-1101 / DSM 17681 / MLHE-1)).